The chain runs to 337 residues: Phosphatidate cytidylyltransferase, mitochondrial (337 aa).

The protein belongs to the TAM41 family. The cofactor is Mg(2+). Brain and liver.

It is found in the mitochondrion inner membrane. The catalysed reaction is a 1,2-diacyl-sn-glycero-3-phosphate + CTP + H(+) = a CDP-1,2-diacyl-sn-glycerol + diphosphate. Its pathway is phospholipid metabolism; CDP-diacylglycerol biosynthesis; CDP-diacylglycerol from sn-glycerol 3-phosphate: step 3/3. Its function is as follows. Catalyzes the conversion of phosphatidic acid (PA) to CDP-diacylglycerol (CDP-DAG), an essential intermediate in the synthesis of phosphatidylglycerol, cardiolipin and phosphatidylinositol. The protein is Phosphatidate cytidylyltransferase, mitochondrial (Tamm41) of Rattus norvegicus (Rat).